A 138-amino-acid chain; its full sequence is Extracellular glycoprotein lacritin (138 aa).

The first 19 residues, 1 to 19 (MKFTTLLFLAAVAGALVYA), serve as a signal peptide directing secretion. A disordered region spans residues 20–79 (EDASSDSTGADPAQEAGTSKPNEEISGPAEPASPPETTTTAQETSAAAVQGTAKVTSSRQ). Over residues 43-67 (EISGPAEPASPPETTTTAQETSAAA) the composition is skewed to low complexity. N-linked (GlcNAc...) asparagine glycosylation occurs at Asn-119.

As to expression, expressed in secretory granules of many acinar cells in lacrimal gland and in scattered acinar cells of salivary glands.

It localises to the secreted. Its function is as follows. Modulates secretion by lacrimal acinar cells. This Homo sapiens (Human) protein is Extracellular glycoprotein lacritin (LACRT).